The chain runs to 189 residues: Ion-translocating oxidoreductase complex subunit B (189 aa).

The segment at 1 to 26 (MSGIFIAIILLTILALLFGILLGFAA) is hydrophobic. Positions 32-90 (EGDPLVDQLEALLPQTQCGQCGYPGCRPYAEAIANGEKINLCPPGGSATMEKLAEMAGV) constitute a 4Fe-4S domain. [4Fe-4S] cluster contacts are provided by C49, C52, C57, C73, C114, C117, C120, C124, C144, C147, C150, and C154. 4Fe-4S ferredoxin-type domains follow at residues 105–134 (KVAY…GSGK) and 135–164 (LMHT…MLPV).

Belongs to the 4Fe4S bacterial-type ferredoxin family. RnfB subfamily. As to quaternary structure, the complex is composed of six subunits: RnfA, RnfB, RnfC, RnfD, RnfE and RnfG. It depends on [4Fe-4S] cluster as a cofactor.

The protein localises to the cell inner membrane. Part of a membrane-bound complex that couples electron transfer with translocation of ions across the membrane. The polypeptide is Ion-translocating oxidoreductase complex subunit B (Shewanella sediminis (strain HAW-EB3)).